The sequence spans 293 residues: Ribosomal protein L11 methyltransferase (293 aa).

The S-adenosyl-L-methionine site is built by Thr145, Gly166, Asp188, and Asn230.

The protein belongs to the methyltransferase superfamily. PrmA family.

It is found in the cytoplasm. It catalyses the reaction L-lysyl-[protein] + 3 S-adenosyl-L-methionine = N(6),N(6),N(6)-trimethyl-L-lysyl-[protein] + 3 S-adenosyl-L-homocysteine + 3 H(+). In terms of biological role, methylates ribosomal protein L11. This is Ribosomal protein L11 methyltransferase from Shewanella baltica (strain OS185).